The chain runs to 322 residues: Phosphatidylglycerol--prolipoprotein diacylglyceryl transferase (322 aa).

A run of 3 helical transmembrane segments spans residues 23-43, 53-73, and 97-117; these read VYPI…AFFW, FFAL…LWFV, and GLSI…YIYF. Residue Arg143 participates in a 1,2-diacyl-sn-glycero-3-phospho-(1'-sn-glycerol) binding. 2 helical membrane-spanning segments follow: residues 191-211 and 250-270; these read PLFL…VWII and LAAM…EIWA.

Belongs to the Lgt family.

It is found in the cell membrane. It catalyses the reaction L-cysteinyl-[prolipoprotein] + a 1,2-diacyl-sn-glycero-3-phospho-(1'-sn-glycerol) = an S-1,2-diacyl-sn-glyceryl-L-cysteinyl-[prolipoprotein] + sn-glycerol 1-phosphate + H(+). Its pathway is protein modification; lipoprotein biosynthesis (diacylglyceryl transfer). Catalyzes the transfer of the diacylglyceryl group from phosphatidylglycerol to the sulfhydryl group of the N-terminal cysteine of a prolipoprotein, the first step in the formation of mature lipoproteins. The protein is Phosphatidylglycerol--prolipoprotein diacylglyceryl transferase of Mycoplasmopsis pulmonis (strain UAB CTIP) (Mycoplasma pulmonis).